A 58-amino-acid polypeptide reads, in one-letter code: UPF0391 membrane protein Gbem_0127 (58 aa).

2 consecutive transmembrane segments (helical) span residues 4 to 24 (WALIFFIIAIIAAVFGFGGIA) and 33 to 53 (ILFYLFLVVAVVMLVSALLAG).

It belongs to the UPF0391 family.

It is found in the cell membrane. The protein is UPF0391 membrane protein Gbem_0127 of Citrifermentans bemidjiense (strain ATCC BAA-1014 / DSM 16622 / JCM 12645 / Bem) (Geobacter bemidjiensis).